The chain runs to 391 residues: Transforming growth factor beta-1 proprotein (391 aa).

The signal sequence occupies residues 1-18 (MDPSPLLALLLLLGAARA). A straightjacket domain region spans residues 19-63 (LSTCQRLDLEAAKKKRIEAVRGQILSKLRLTAPPPASETPPRPLP). Residues 64 to 270 (DDVRALYNST…ALPAERANEL (207 aa)) are arm domain. Asn-71, Asn-126, and Asn-171 each carry an N-linked (GlcNAc...) asparagine glycan. The bowtie tail stretch occupies residues 221 to 249 (EMGPGHADEMRISIEGFEQQRGDMQSIAK). Positions 241–243 (RGD) match the Cell attachment site motif. Disulfide bonds link Cys-284–Cys-295, Cys-294–Cys-357, Cys-323–Cys-388, and Cys-327–Cys-390.

It belongs to the TGF-beta family. In terms of assembly, latency-associated peptide: Homodimer; disulfide-linked. Latency-associated peptide: Interacts with Transforming growth factor beta-1 (TGF-beta-1) chain; interaction is non-covalent and maintains (TGF-beta-1) in a latent state; each Latency-associated peptide (LAP) monomer interacts with TGF-beta-1 in the other monomer. Transforming growth factor beta-1: Homodimer; disulfide-linked. Transforming growth factor beta-1: Interacts with TGF-beta receptors (TGFBR1 and TGFBR2), leading to signal transduction. Post-translationally, transforming growth factor beta-1 proprotein: The precursor proprotein is cleaved in the Golgi apparatus to form Transforming growth factor beta-1 (TGF-beta-1) and Latency-associated peptide (LAP) chains, which remain non-covalently linked, rendering TGF-beta-1 inactive.

Its subcellular location is the secreted. It is found in the extracellular space. The protein localises to the extracellular matrix. Transforming growth factor beta-1 proprotein: Precursor of the Latency-associated peptide (LAP) and Transforming growth factor beta-1 (TGF-beta-1) chains, which constitute the regulatory and active subunit of TGF-beta-1, respectively. In terms of biological role, required to maintain the Transforming growth factor beta-1 (TGF-beta-1) chain in a latent state during storage in extracellular matrix. Associates non-covalently with TGF-beta-1 and regulates its activation via interaction with 'milieu molecules', such as LTBP1, LRRC32/GARP and LRRC33/NRROS, that control activation of TGF-beta-1. Interaction with integrins (ITGAV:ITGB6 or ITGAV:ITGB8) results in distortion of the Latency-associated peptide chain and subsequent release of the active TGF-beta-1. Its function is as follows. Transforming growth factor beta-1: Multifunctional protein that regulates the growth and differentiation of various cell types and is involved in various processes, such as normal development, immune function, microglia function and responses to neurodegeneration. Activation into mature form follows different steps: following cleavage of the proprotein in the Golgi apparatus, Latency-associated peptide (LAP) and Transforming growth factor beta-1 (TGF-beta-1) chains remain non-covalently linked rendering TGF-beta-1 inactive during storage in extracellular matrix. At the same time, LAP chain interacts with 'milieu molecules', such as LTBP1, LRRC32/GARP and LRRC33/NRROS that control activation of TGF-beta-1 and maintain it in a latent state during storage in extracellular milieus. TGF-beta-1 is released from LAP by integrins (ITGAV:ITGB6 or ITGAV:ITGB8): integrin-binding to LAP stabilizes an alternative conformation of the LAP bowtie tail and results in distortion of the LAP chain and subsequent release of the active TGF-beta-1. Once activated following release of LAP, TGF-beta-1 acts by binding to TGF-beta receptors (TGFBR1 and TGFBR2), which transduce signal. While expressed by many cells types, TGF-beta-1 only has a very localized range of action within cell environment thanks to fine regulation of its activation by Latency-associated peptide chain (LAP) and 'milieu molecules'. Plays an important role in bone remodeling: acts as a potent stimulator of osteoblastic bone formation. Can promote either T-helper 17 cells (Th17) or regulatory T-cells (Treg) lineage differentiation in a concentration-dependent manner. Can induce epithelial-to-mesenchymal transition (EMT) and cell migration in various cell types. The sequence is that of Transforming growth factor beta-1 proprotein (TGFB1) from Gallus gallus (Chicken).